The chain runs to 131 residues: D-ribose pyranase (131 aa).

Catalysis depends on His-20, which acts as the Proton donor. Residues Asp-28, His-98, and 120-122 (YAN) contribute to the substrate site.

This sequence belongs to the RbsD / FucU family. RbsD subfamily. In terms of assembly, homodecamer.

Its subcellular location is the cytoplasm. The catalysed reaction is beta-D-ribopyranose = beta-D-ribofuranose. The protein operates within carbohydrate metabolism; D-ribose degradation; D-ribose 5-phosphate from beta-D-ribopyranose: step 1/2. In terms of biological role, catalyzes the interconversion of beta-pyran and beta-furan forms of D-ribose. This Clostridium botulinum (strain Eklund 17B / Type B) protein is D-ribose pyranase.